The primary structure comprises 586 residues: MHTPPALPRRFQGGGRVRTPGSHRQGKDNLERELSGGCAPDFLPQAQDSNHFIMESLFCESSGDSSLEKEFLGAPVGPSVSTPNSQHSSPSRSLSANSIKVEMYSDEESSRLLGPDERLLDKDDSVIVEDSLSEPLGYCDGSGPEPHSPGGIRLPNGKLKCDVCGMVCIGPNVLMVHKRSHTGERPFHCNQCGASFTQKGNLLRHIKLHSGEKPFKCPFCNYACRRRDALTGHLRTHSVSSPTVGKPYKCNYCGRSYKQQSTLEEHKERCHNYLQSLSTDAQALTGQPGDEIRDLEMVPDSMLHPSTERPTFIDRLANSLTKRKRSTPQKFVGEKQMRFSLSDLPYDVNASGGYEKDVELVAHHGLEPGFGGSLAFVGTEHLRPLRLPPTNCISELTPVISSVYTQMQPIPSRLELPGSREAGEGPEDLGDGGPLLYRARGSLTDPGASPSNGCQDSTDTESNHEDRIGGVVSLPQGPPPQPPPTIVVGRHSPAYAKEDPKPQEGLLRGTPGPSKEVLRVVGESGEPVKAFKCEHCRILFLDHVMFTIHMGCHGFRDPFECNICGYHSQDRYEFSSHIVRGEHKVG.

2 disordered regions span residues Met1–Phe42 and Glu68–Ser98. Basic and acidic residues predominate over residues Gln25–Leu34. Residues Ser79–Ser98 show a composition bias toward polar residues. Lys100 is covalently cross-linked (Glycyl lysine isopeptide (Lys-Gly) (interchain with G-Cter in SUMO2)). Ser105 is subject to Phosphoserine. C2H2-type zinc fingers lie at residues Leu159–His181, Phe187–His209, Phe215–His237, and Tyr248–His271. The interaction with FOXP3 stretch occupies residues Ala281 to Gly586. The residue at position 335 (Lys335) is an N6-acetyllysine. Residues Arg413 to Arg490 form a disordered region. The CTBP-binding motif PEDLG signature appears at Gly423–Gly433. Pro residues predominate over residues Gln476–Thr485. Lys501 is covalently cross-linked (Glycyl lysine isopeptide (Lys-Gly) (interchain with G-Cter in SUMO2)). 2 consecutive C2H2-type zinc fingers follow at residues Phe531 to His553 and Phe559 to His583.

Belongs to the Ikaros C2H2-type zinc-finger protein family. Self-associates. Interacts with other family members; IKZF1, IKZF2, IKZF3 and IKZF5. Interacts with CTBP2, SPI1 and MITF. Interacts with FOXP3 and CTBP1. As to expression, expressed mainly in the brain. Up-regulated in long term cultured astrocytes. Down-regulated during osteoclast differentiation.

Its subcellular location is the nucleus. In terms of biological role, DNA-binding protein that binds to the 5'GGGAATRCC-3' Ikaros-binding sequence. Interacts with SPI1 and MITF to repress transcription of the CTSK and ACP5 promoters via recruitment of corepressors SIN3A and CTBP2. May be involved in the development of central and peripheral nervous systems. Essential for the inhibitory function of regulatory T-cells (Treg). Mediates FOXP3-mediated gene silencing in regulatory T-cells (Treg) via recruitment of corepressor CTBP1. The chain is Zinc finger protein Eos (Ikzf4) from Mus musculus (Mouse).